Here is a 360-residue protein sequence, read N- to C-terminus: Heme A synthase (360 aa).

The next 8 helical transmembrane spans lie at 29-49 (WLFL…ATRL), 111-131 (FLGR…WWTG), 139-159 (LGLV…WIMV), 175-195 (LAAH…LAAG), 210-230 (LTAL…GLVA), 269-289 (VALV…LALL), 309-329 (ALAG…LLAV), and 330-350 (PLWA…MAVA). Histidine 276 serves as a coordination point for heme. Histidine 337 contacts heme.

It belongs to the COX15/CtaA family. Type 2 subfamily. As to quaternary structure, interacts with CtaB. The cofactor is heme b.

It is found in the cell membrane. The enzyme catalyses Fe(II)-heme o + 2 A + H2O = Fe(II)-heme a + 2 AH2. It participates in porphyrin-containing compound metabolism; heme A biosynthesis; heme A from heme O: step 1/1. In terms of biological role, catalyzes the conversion of heme O to heme A by two successive hydroxylations of the methyl group at C8. The first hydroxylation forms heme I, the second hydroxylation results in an unstable dihydroxymethyl group, which spontaneously dehydrates, resulting in the formyl group of heme A. This Methylobacterium sp. (strain 4-46) protein is Heme A synthase.